A 609-amino-acid chain; its full sequence is UvrABC system protein C (609 aa).

In terms of domain architecture, GIY-YIG spans 19-97 (ASPGCYLWKS…IKKHNPRFNV (79 aa)). A UVR domain is found at 208-243 (ESLVSDLNIKMSNASERLDFEKAARYRDMLQRIQNF).

The protein belongs to the UvrC family. In terms of assembly, interacts with UvrB in an incision complex.

The protein resides in the cytoplasm. Its function is as follows. The UvrABC repair system catalyzes the recognition and processing of DNA lesions. UvrC both incises the 5' and 3' sides of the lesion. The N-terminal half is responsible for the 3' incision and the C-terminal half is responsible for the 5' incision. In Leptospira interrogans serogroup Icterohaemorrhagiae serovar copenhageni (strain Fiocruz L1-130), this protein is UvrABC system protein C.